The chain runs to 353 residues: Deoxyhypusine synthase (353 aa).

NAD(+) contacts are provided by residues 90-94, 116-118, E122, and D228; these read SNLIS and TAG. 121–122 lines the spermidine pocket; sequence EE. D233 is a spermidine binding site. Position 275 (G275) interacts with NAD(+). Residue H280 participates in spermidine binding. An NAD(+)-binding site is contributed by 300 to 301; the sequence is TA. Residues 306 to 308 and 315 to 321 contribute to the spermidine site; these read GSD and EAVSWGK. The Nucleophile role is filled by K321. 334-335 lines the NAD(+) pocket; that stretch reads EA.

The protein belongs to the deoxyhypusine synthase family. As to quaternary structure, homotetramer. The cofactor is NAD(+).

It catalyses the reaction [eIF5A protein]-L-lysine + spermidine = [eIF5A protein]-deoxyhypusine + propane-1,3-diamine. The protein operates within protein modification; eIF5A hypusination. In terms of biological role, catalyzes the NAD-dependent oxidative cleavage of spermidine and the subsequent transfer of the butylamine moiety of spermidine to the epsilon-amino group of a specific lysine residue of the eIF-5A precursor protein to form the intermediate deoxyhypusine residue. The polypeptide is Deoxyhypusine synthase (dys-1) (Neurospora crassa (strain ATCC 24698 / 74-OR23-1A / CBS 708.71 / DSM 1257 / FGSC 987)).